Here is an 882-residue protein sequence, read N- to C-terminus: Alanine--tRNA ligase (882 aa).

Zn(2+) is bound by residues His-570, His-574, Cys-672, and His-676.

It belongs to the class-II aminoacyl-tRNA synthetase family. Zn(2+) serves as cofactor.

It is found in the cytoplasm. It catalyses the reaction tRNA(Ala) + L-alanine + ATP = L-alanyl-tRNA(Ala) + AMP + diphosphate. Its function is as follows. Catalyzes the attachment of alanine to tRNA(Ala) in a two-step reaction: alanine is first activated by ATP to form Ala-AMP and then transferred to the acceptor end of tRNA(Ala). Also edits incorrectly charged Ser-tRNA(Ala) and Gly-tRNA(Ala) via its editing domain. This chain is Alanine--tRNA ligase, found in Xanthomonas campestris pv. campestris (strain ATCC 33913 / DSM 3586 / NCPPB 528 / LMG 568 / P 25).